A 181-amino-acid polypeptide reads, in one-letter code: HGPRTase-like protein 1 (181 aa).

It belongs to the purine/pyrimidine phosphoribosyltransferase family. Archaeal HPRT subfamily.

Functionally, may catalyze a purine salvage reaction, the substrate is unknown. The polypeptide is HGPRTase-like protein 1 (Halalkalicoccus jeotgali (strain DSM 18796 / CECT 7217 / JCM 14584 / KCTC 4019 / B3)).